Here is a 115-residue protein sequence, read N- to C-terminus: Migration and invasion enhancer 1 (115 aa).

Polar residues predominate over residues methionine 1–valine 10. The segment at methionine 1–glycine 22 is disordered. At serine 2 the chain carries N-acetylserine. Cysteine 30 and cysteine 33 are joined by a disulfide. Residue cysteine 112 is the site of S-geranylgeranyl cysteine attachment. Residues valine 113–leucine 115 constitute a propeptide, removed in mature form.

This sequence belongs to the SelWTH family. In terms of assembly, interacts with GPX1. Isoprenylation facilitates association with the plasma membrane and enhances the migratory phenotype of cells by inducing increased filopodia formation.

It is found in the cytoplasm. The protein resides in the cytosol. Its subcellular location is the cell membrane. Its function is as follows. Increases cell migration by inducing filopodia formation at the leading edge of migrating cells. Plays a role in regulation of apoptosis, possibly through control of CASP3. May be involved in a redox-related process. This is Migration and invasion enhancer 1 (MIEN1) from Bos taurus (Bovine).